Consider the following 171-residue polypeptide: Small ribosomal subunit protein uS13 (171 aa).

Positions 128 to 171 (HERGQKVRGQRTKSTGRTEGTIGVNVEAIKEEQAEDDAADGGEE) are disordered. A compositionally biased stretch (acidic residues) spans 160–171 (QAEDDAADGGEE).

This sequence belongs to the universal ribosomal protein uS13 family. As to quaternary structure, part of the 30S ribosomal subunit. Forms a loose heterodimer with protein S19. Forms two bridges to the 50S subunit in the 70S ribosome.

In terms of biological role, located at the top of the head of the 30S subunit, it contacts several helices of the 16S rRNA. In the 70S ribosome it contacts the 23S rRNA (bridge B1a) and protein L5 of the 50S subunit (bridge B1b), connecting the 2 subunits; these bridges are implicated in subunit movement. This chain is Small ribosomal subunit protein uS13, found in Halobacterium salinarum (strain ATCC 700922 / JCM 11081 / NRC-1) (Halobacterium halobium).